Consider the following 56-residue polypeptide: LAAVSVDCSEYPKPECTAEERPICGSDNKTYGNKCNFCNAVVESNGTLTLRNFGKC.

Positions 6–56 (VDCSEYPKPECTAEERPICGSDNKTYGNKCNFCNAVVESNGTLTLRNFGKC) constitute a Kazal-like domain. Cystine bridges form between Cys-8/Cys-38, Cys-16/Cys-35, and Cys-24/Cys-56. A glycan (N-linked (GlcNAc...) asparagine) is linked at Asn-45.

Its subcellular location is the secreted. In Bambusicola thoracicus (Chinese bamboo-partridge), this protein is Ovomucoid.